Here is a 34-residue protein sequence, read N- to C-terminus: Conotoxin de13a (34 aa).

A 4-hydroxyproline mark is found at proline 3 and proline 7. A 6'-bromotryptophan modification is found at tryptophan 14. Lysine 18 bears the 5-hydroxylysine mark. A 4-hydroxyproline modification is found at proline 21. Lysine 25 carries the post-translational modification 5-hydroxylysine. Histidine 32 is modified (histidine amide).

Post-translationally, contains 4 disulfide bonds. In terms of processing, the diastereomeric form of 5-hydroxylysine found was not conclusively established, but it is probably 5R. In terms of tissue distribution, expressed by the venom duct.

It is found in the secreted. The protein is Conotoxin de13a of Conasprella delessertii (Sozon's cone).